A 1289-amino-acid chain; its full sequence is Ethylene-insensitive protein 2.1 (1289 aa).

The next 5 helical transmembrane spans lie at 18–38, 48–68, 96–116, 128–148, and 155–175; these read LLPA…PGKW, FGFD…LCQY, FLGV…ILGI, LSTC…FATL, and SFLC…GVLI. Asn185 is a glycosylation site (N-linked (GlcNAc...) asparagine). Residues 199–219 form a helical membrane-spanning segment; that stretch reads LMSLLGASIMPHNFFLHSAIV. The N-linked (GlcNAc...) asparagine glycan is linked to Asn227. Helical transmembrane passes span 235-255, 260-280, 288-308, 335-355, 356-376, 393-413, and 439-459; these read LNHF…NFVL, ANVF…MSLM, VAPF…AFSW, IIAV…GIYQ, LLIL…IPLF, FLEF…IIFV, and YIVL…LAAT. An N-linked (GlcNAc...) asparagine glycan is attached at Asn521. The segment at 611 to 659 is disordered; that stretch reads LHTEKEDDEGDNWEPEDSSKGVPGSTLSLTSDGPGSFRSLSGKSDAGGN. The segment covering 616 to 626 has biased composition (acidic residues); it reads EDDEGDNWEPE. A compositionally biased stretch (polar residues) spans 635-652; sequence STLSLTSDGPGSFRSLSG. Phosphoserine occurs at positions 646 and 663. A glycan (N-linked (GlcNAc...) asparagine) is linked at Asn745. Positions 792-816 are disordered; sequence SIADSSERRYSGVRTPPSSDGWDNQ. The span at 807–816 shows a compositional bias: polar residues; the sequence is PPSSDGWDNQ. Thr819 is subject to Phosphothreonine. Phosphoserine is present on Ser923. N-linked (GlcNAc...) asparagine glycosylation occurs at Asn1025. Positions 1208 to 1227 are disordered; the sequence is HRSSPPASNGMLPPASKPGR. Residues 1274 to 1281 carry the Nuclear localization signal motif; it reads LKRYKRRL.

The protein belongs to the NRAMP (TC 2.A.55) family.

It localises to the endoplasmic reticulum membrane. It is found in the nucleus. The protein localises to the cytoplasm. In terms of biological role, central factor in signaling pathways regulated by ethylene (ET) and involved in various processes including development, plant defense, senescence, nucleotide sugar flux, and tropisms. Functionally, trafficking signal inducing ethylene response. The nuclear localization is both necessary and sufficient to activate EIN3-mediated transcription and ethylene responses. The chain is Ethylene-insensitive protein 2.1 from Populus trichocarpa (Western balsam poplar).